Here is a 279-residue protein sequence, read N- to C-terminus: MSAEVTLHDNIHYDLSADCQHCFGLCCVALPYAKSADFAFDKDGGTPCRNLQSNYQCSIHKDLREKGFRGCSAYECFGAGQKVSQITYEGKDWRNSPETANQMFDVFPIMQQLHEMLWYLHEALSIDIAKPIHSELRTTFEKIERLTRLSKERLLTLQVDEHRAEVNEWLLKTSELVRAQARHPKLPKKVSRGSVLIGAKLKGLDLRGANLRGALLIAADLRNADLRMTDFIGADMRDADLSGADLTGSIFLTQAQVNAANGDSNTKLPLSVRTPAHWK.

This is an uncharacterized protein from Bacillus subtilis (strain 168).